The following is a 244-amino-acid chain: Small ribosomal subunit protein uS2 (244 aa).

It belongs to the universal ribosomal protein uS2 family.

The protein is Small ribosomal subunit protein uS2 of Halalkalibacterium halodurans (strain ATCC BAA-125 / DSM 18197 / FERM 7344 / JCM 9153 / C-125) (Bacillus halodurans).